Consider the following 1992-residue polypeptide: Otoferlin (1992 aa).

C2 domains are found at residues 1–98, 241–362, and 405–536; these read MALV…EVSD, KRSK…HKWA, and IEGN…FLPT. Over 1–1958 the chain is Cytoplasmic; sequence MALVVHLKTV…IRYFIWHNYR (1958 aa). The segment at 655–699 is disordered; sequence PALAKKKKEGGGESEEEESELIHNSSEEEAEDDGDLTSVPSTPPM. C2 domains follow at residues 952–1077 and 1124–1250; these read IQAV…PPRF and RGPI…NNWA. Ca(2+) is bound by residues Asp-984, Asp-990, Asp-1046, and Asp-1048. Residues 1282-1363 adopt a coiled-coil conformation; sequence VKVDLNEDEK…ESAEIKADDF (82 aa). Disordered regions lie at residues 1288–1311 and 1354–1399; these read EDEK…EEEP and ESAE…KPKV. Basic and acidic residues predominate over residues 1356–1399; sequence AEIKADDFPMKGTKPKEKSKDKKSTKDKKKNNDGTEKRPPKPKV. 2 C2 domains span residues 1470–1588 and 1711–1860; these read DPNM…ATCG and PAPG…KQCS. The Ca(2+) site is built by Asp-1503, Asp-1509, Asp-1558, Asp-1560, Asp-1566, Asp-1831, Ser-1834, and Asp-1837. The chain crosses the membrane as a helical span at residues 1959–1979; the sequence is WLILKALALLLLLLLVGLFLY. The Extracellular segment spans residues 1980–1992; that stretch reads SIPGYLVKKLLGA.

Belongs to the ferlin family. Ca(2+) serves as cofactor.

It localises to the cytoplasmic vesicle. Its subcellular location is the secretory vesicle. The protein localises to the synaptic vesicle membrane. The protein resides in the basolateral cell membrane. It is found in the endoplasmic reticulum membrane. It localises to the golgi apparatus membrane. Its subcellular location is the presynaptic cell membrane. The protein localises to the cell membrane. In terms of biological role, key calcium ion sensor involved in the Ca(2+)-triggered synaptic vesicle-plasma membrane fusion and in the control of neurotransmitter release at these output synapses. In Danio rerio (Zebrafish), this protein is Otoferlin (otof).